A 307-amino-acid chain; its full sequence is MTKKMGLLVVAYGTPYKESDIEPYYTDIRHGKRPSEEELQDLKDRYEFIGGLSPLAGTTDDQADALVSALNKAYADVEFKLYLGLKHISPFIEDAVEQMHKDGITEAITVVLAPHYSSFSVGSYDKRADEEAAKYGIQLTHVKHYYEQPKFIEYWTNKVNETLAQIPEEEHKDTVLVVSAHSLPKGLIEKNNDPYPQELEHTALLIKEQSNIEHIAIGWQSEGNTGTPWLGPDVQDLTRDLYEKHQYKNFIYTPVGFVCEHLEVLYDNDYECKVVCDDIGANYYRPKMPNTHPLFIGAIVDEIKSIF.

Fe-coproporphyrin III is bound by residues Tyr-12, Arg-29, 45-46 (RY), Ser-53, and Tyr-124. Fe(2+) contacts are provided by His-181 and Glu-263.

This sequence belongs to the ferrochelatase family.

It is found in the cytoplasm. It carries out the reaction Fe-coproporphyrin III + 2 H(+) = coproporphyrin III + Fe(2+). It participates in porphyrin-containing compound metabolism; protoheme biosynthesis. Involved in coproporphyrin-dependent heme b biosynthesis. Catalyzes the insertion of ferrous iron into coproporphyrin III to form Fe-coproporphyrin III. The sequence is that of Coproporphyrin III ferrochelatase from Staphylococcus aureus (strain MRSA252).